The sequence spans 252 residues: Chitooligosaccharide deacetylase (252 aa).

His61 and His125 together coordinate Mg(2+).

The protein belongs to the YdjC deacetylase family. ChbG subfamily. As to quaternary structure, homodimer. Mg(2+) serves as cofactor.

Its subcellular location is the cytoplasm. It carries out the reaction N,N'-diacetylchitobiose + H2O = N-acetyl-beta-D-glucosaminyl-(1-&gt;4)-D-glucosamine + acetate. It catalyses the reaction diacetylchitobiose-6'-phosphate + H2O = N'-monoacetylchitobiose-6'-phosphate + acetate. Its pathway is glycan degradation; chitin degradation. Functionally, involved in the degradation of chitin. ChbG is essential for growth on the acetylated chitooligosaccharides chitobiose and chitotriose but is dispensable for growth on cellobiose and chitosan dimer, the deacetylated form of chitobiose. Deacetylation of chitobiose-6-P and chitotriose-6-P is necessary for both the activation of the chb promoter by the regulatory protein ChbR and the hydrolysis of phosphorylated beta-glucosides by the phospho-beta-glucosidase ChbF. Catalyzes the removal of only one acetyl group from chitobiose-6-P to yield monoacetylchitobiose-6-P, the inducer of ChbR and the substrate of ChbF. In Salmonella enteritidis PT4 (strain P125109), this protein is Chitooligosaccharide deacetylase.